The following is a 344-amino-acid chain: Ketol-acid reductoisomerase (NADP(+)) (344 aa).

A KARI N-terminal Rossmann domain is found at Ala2–Thr181. NADP(+)-binding positions include Tyr25–Gln28, Arg48, Ser52, and Asp82–Gln85. His107 is an active-site residue. An NADP(+)-binding site is contributed by Gly133. The 146-residue stretch at Ser182–Val327 folds into the KARI C-terminal knotted domain. Positions 190, 194, 226, and 230 each coordinate Mg(2+). A substrate-binding site is contributed by Ser251.

Belongs to the ketol-acid reductoisomerase family. It depends on Mg(2+) as a cofactor.

The catalysed reaction is (2R)-2,3-dihydroxy-3-methylbutanoate + NADP(+) = (2S)-2-acetolactate + NADPH + H(+). The enzyme catalyses (2R,3R)-2,3-dihydroxy-3-methylpentanoate + NADP(+) = (S)-2-ethyl-2-hydroxy-3-oxobutanoate + NADPH + H(+). Its pathway is amino-acid biosynthesis; L-isoleucine biosynthesis; L-isoleucine from 2-oxobutanoate: step 2/4. It functions in the pathway amino-acid biosynthesis; L-valine biosynthesis; L-valine from pyruvate: step 2/4. In terms of biological role, involved in the biosynthesis of branched-chain amino acids (BCAA). Catalyzes an alkyl-migration followed by a ketol-acid reduction of (S)-2-acetolactate (S2AL) to yield (R)-2,3-dihydroxy-isovalerate. In the isomerase reaction, S2AL is rearranged via a Mg-dependent methyl migration to produce 3-hydroxy-3-methyl-2-ketobutyrate (HMKB). In the reductase reaction, this 2-ketoacid undergoes a metal-dependent reduction by NADPH to yield (R)-2,3-dihydroxy-isovalerate. This chain is Ketol-acid reductoisomerase (NADP(+)), found in Oceanobacillus iheyensis (strain DSM 14371 / CIP 107618 / JCM 11309 / KCTC 3954 / HTE831).